Reading from the N-terminus, the 40-residue chain is Photosystem II reaction center protein J (40 aa).

A helical membrane pass occupies residues 8-28 (IPLWLIGTVTGIPVIGLVGIF).

It belongs to the PsbJ family. PSII is composed of 1 copy each of membrane proteins PsbA, PsbB, PsbC, PsbD, PsbE, PsbF, PsbH, PsbI, PsbJ, PsbK, PsbL, PsbM, PsbT, PsbX, PsbY, PsbZ, Psb30/Ycf12, at least 3 peripheral proteins of the oxygen-evolving complex and a large number of cofactors. It forms dimeric complexes.

The protein resides in the plastid. Its subcellular location is the chloroplast thylakoid membrane. Its function is as follows. One of the components of the core complex of photosystem II (PSII). PSII is a light-driven water:plastoquinone oxidoreductase that uses light energy to abstract electrons from H(2)O, generating O(2) and a proton gradient subsequently used for ATP formation. It consists of a core antenna complex that captures photons, and an electron transfer chain that converts photonic excitation into a charge separation. The polypeptide is Photosystem II reaction center protein J (Cucumis sativus (Cucumber)).